Reading from the N-terminus, the 89-residue chain is MMAVATADELRSLSGDELVDKLREAKEELFNLRFQAATGQLSNNRRLRAVRRDIAKIYTVMRERELGITGDPALVAGAADDDATQSERA.

This sequence belongs to the universal ribosomal protein uL29 family.

In Frankia alni (strain DSM 45986 / CECT 9034 / ACN14a), this protein is Large ribosomal subunit protein uL29.